We begin with the raw amino-acid sequence, 318 residues long: NADH-ubiquinone oxidoreductase chain 1 (318 aa).

The next 8 helical transmembrane spans lie at 2-22, 68-88, 100-120, 147-167, 172-192, 217-237, 253-273, and 294-314; these read FMIN…FLTL, ISMF…MWIP, LGVL…LWSG, AIIL…TLII, VWLI…TLAE, AGPF…MNIF, ELYT…FLWI, and LPLT…LSSI.

Belongs to the complex I subunit 1 family.

The protein resides in the mitochondrion inner membrane. The enzyme catalyses a ubiquinone + NADH + 5 H(+)(in) = a ubiquinol + NAD(+) + 4 H(+)(out). In terms of biological role, core subunit of the mitochondrial membrane respiratory chain NADH dehydrogenase (Complex I) that is believed to belong to the minimal assembly required for catalysis. Complex I functions in the transfer of electrons from NADH to the respiratory chain. The immediate electron acceptor for the enzyme is believed to be ubiquinone. The sequence is that of NADH-ubiquinone oxidoreductase chain 1 (MT-ND1) from Ovis aries (Sheep).